The sequence spans 483 residues: Regulatory protein ViaA (483 aa).

This sequence belongs to the ViaA family. As to quaternary structure, homodimer. Interacts with RavA.

It is found in the cytoplasm. Component of the RavA-ViaA chaperone complex, which may act on the membrane to optimize the function of some of the respiratory chains. ViaA stimulates the ATPase activity of RavA. The sequence is that of Regulatory protein ViaA from Escherichia coli O6:K15:H31 (strain 536 / UPEC).